The primary structure comprises 1054 residues: DNA-directed RNA polymerase subunit beta' (1054 aa).

Mg(2+)-binding residues include Asp383, Asp385, and Asp387. Cys752, Cys826, Cys833, and Cys836 together coordinate Zn(2+).

This sequence belongs to the RNA polymerase beta' chain family. As to quaternary structure, the RNAP catalytic core consists of 2 alpha, 1 beta, 1 beta' and 1 omega subunit. When a sigma factor is associated with the core the holoenzyme is formed, which can initiate transcription. It depends on Mg(2+) as a cofactor. The cofactor is Zn(2+).

The enzyme catalyses RNA(n) + a ribonucleoside 5'-triphosphate = RNA(n+1) + diphosphate. DNA-dependent RNA polymerase catalyzes the transcription of DNA into RNA using the four ribonucleoside triphosphates as substrates. The protein is DNA-directed RNA polymerase subunit beta' of Weissella paramesenteroides (Leuconostoc paramesenteroides).